We begin with the raw amino-acid sequence, 513 residues long: Cytochrome P450 86A1 (513 aa).

Residues 7–27 (ILTGYAVAALSVYALWFYFLS) traverse the membrane as a helical segment. C456 is a binding site for heme.

This sequence belongs to the cytochrome P450 family. Heme is required as a cofactor. Expressed in roots.

It localises to the membrane. The catalysed reaction is an omega-methyl-long-chain fatty acid + reduced [NADPH--hemoprotein reductase] + O2 = an omega-hydroxy-long-chain fatty acid + oxidized [NADPH--hemoprotein reductase] + H2O + H(+). In terms of biological role, catalyzes the omega-hydroxylation of various fatty acids (FA). Acts on saturated and unsaturated fatty acids with chain lengths from C12 to C18 but not on hexadecane. This chain is Cytochrome P450 86A1 (CYP86A1), found in Arabidopsis thaliana (Mouse-ear cress).